Consider the following 432-residue polypeptide: D-amino acid dehydrogenase (432 aa).

Residue 3–17 coordinates FAD; sequence VLVLGSGVIGTTTAY.

Belongs to the DadA oxidoreductase family. FAD serves as cofactor.

The enzyme catalyses a D-alpha-amino acid + A + H2O = a 2-oxocarboxylate + AH2 + NH4(+). It participates in amino-acid degradation; D-alanine degradation; NH(3) and pyruvate from D-alanine: step 1/1. Its function is as follows. Oxidative deamination of D-amino acids. The chain is D-amino acid dehydrogenase from Azotobacter vinelandii (strain DJ / ATCC BAA-1303).